Here is a 401-residue protein sequence, read N- to C-terminus: Mannonate dehydratase (401 aa).

It belongs to the mannonate dehydratase family. Fe(2+) serves as cofactor. Mn(2+) is required as a cofactor.

It catalyses the reaction D-mannonate = 2-dehydro-3-deoxy-D-gluconate + H2O. The protein operates within carbohydrate metabolism; pentose and glucuronate interconversion. Functionally, catalyzes the dehydration of D-mannonate. The protein is Mannonate dehydratase of Brucella canis (strain ATCC 23365 / NCTC 10854 / RM-666).